The primary structure comprises 128 residues: Lutropin subunit beta (128 aa).

An N-terminal signal peptide occupies residues 1 to 20 (MERLQGLLLWLLLSPSVVWA). 5 disulfides stabilise this stretch: cysteine 29–cysteine 77, cysteine 43–cysteine 92, cysteine 54–cysteine 108, cysteine 58–cysteine 110, and cysteine 113–cysteine 120. Residue asparagine 33 is glycosylated (N-linked (GlcNAc...) asparagine).

This sequence belongs to the glycoprotein hormones subunit beta family. In terms of assembly, heterodimer of a common alpha chain and a unique beta chain which confers biological specificity to thyrotropin, lutropin, follitropin and gonadotropin.

Its subcellular location is the secreted. Functionally, promotes spermatogenesis and ovulation by stimulating the testes and ovaries to synthesize steroids. The protein is Lutropin subunit beta (LHB) of Phodopus sungorus (Striped hairy-footed hamster).